The primary structure comprises 452 residues: Pup--protein ligase (452 aa).

Residue E9 coordinates Mg(2+). R53 is an ATP binding site. Residue Y55 participates in Mg(2+) binding. D57 functions as the Proton acceptor in the catalytic mechanism. A Mg(2+)-binding site is contributed by E63. Positions 66 and 419 each coordinate ATP.

This sequence belongs to the Pup ligase/Pup deamidase family. Pup-conjugating enzyme subfamily.

The catalysed reaction is ATP + [prokaryotic ubiquitin-like protein]-L-glutamate + [protein]-L-lysine = ADP + phosphate + N(6)-([prokaryotic ubiquitin-like protein]-gamma-L-glutamyl)-[protein]-L-lysine.. Its pathway is protein degradation; proteasomal Pup-dependent pathway. It functions in the pathway protein modification; protein pupylation. In terms of biological role, catalyzes the covalent attachment of the prokaryotic ubiquitin-like protein modifier Pup to the proteasomal substrate proteins, thereby targeting them for proteasomal degradation. This tagging system is termed pupylation. The ligation reaction involves the side-chain carboxylate of the C-terminal glutamate of Pup and the side-chain amino group of a substrate lysine. The sequence is that of Pup--protein ligase from Salinispora arenicola (strain CNS-205).